A 382-amino-acid polypeptide reads, in one-letter code: Nonsense-mediated mRNA decay factor SMG9 (382 aa).

Residues 1-66 are disordered; that stretch reads MKKVEILKTP…PDSSVSKSSG (66 aa).

It belongs to the SMG9 family.

Involved in nonsense-mediated decay (NMD) of mRNAs containing premature stop codons. Probable component of kinase complex containing smg-1 and recruited to stalled ribosomes. The sequence is that of Nonsense-mediated mRNA decay factor SMG9 (smg-9) from Caenorhabditis briggsae.